Reading from the N-terminus, the 270-residue chain is Tryptophan synthase alpha chain (270 aa).

Residues E49 and D60 each act as proton acceptor in the active site.

The protein belongs to the TrpA family. In terms of assembly, tetramer of two alpha and two beta chains.

The catalysed reaction is (1S,2R)-1-C-(indol-3-yl)glycerol 3-phosphate + L-serine = D-glyceraldehyde 3-phosphate + L-tryptophan + H2O. It functions in the pathway amino-acid biosynthesis; L-tryptophan biosynthesis; L-tryptophan from chorismate: step 5/5. Functionally, the alpha subunit is responsible for the aldol cleavage of indoleglycerol phosphate to indole and glyceraldehyde 3-phosphate. This Gluconobacter oxydans (strain 621H) (Gluconobacter suboxydans) protein is Tryptophan synthase alpha chain.